The sequence spans 539 residues: Phosphoenolpyruvate carboxykinase (ATP) (539 aa).

R64, Y206, and K212 together coordinate substrate. ATP is bound by residues K212, H231, and 247–255 (GLSGTGKTT). Mn(2+)-binding residues include K212 and H231. Position 268 (D268) interacts with Mn(2+). ATP is bound by residues E296, R332, 448-449 (RI), and T454. R332 contributes to the substrate binding site.

Belongs to the phosphoenolpyruvate carboxykinase (ATP) family. In terms of assembly, monomer. Mn(2+) is required as a cofactor.

It is found in the cytoplasm. It carries out the reaction oxaloacetate + ATP = phosphoenolpyruvate + ADP + CO2. Its pathway is carbohydrate biosynthesis; gluconeogenesis. Its function is as follows. Involved in the gluconeogenesis. Catalyzes the conversion of oxaloacetate (OAA) to phosphoenolpyruvate (PEP) through direct phosphoryl transfer between the nucleoside triphosphate and OAA. The sequence is that of Phosphoenolpyruvate carboxykinase (ATP) from Yersinia pseudotuberculosis serotype IB (strain PB1/+).